A 66-amino-acid chain; its full sequence is Large ribosomal subunit protein bL33c (66 aa).

The protein belongs to the bacterial ribosomal protein bL33 family.

Its subcellular location is the plastid. The protein is Large ribosomal subunit protein bL33c of Cuscuta gronovii (Common dodder).